We begin with the raw amino-acid sequence, 491 residues long: Serine hydroxymethyltransferase (491 aa).

Residues Leu-173 and Gly-177 to Leu-179 each bind (6S)-5,6,7,8-tetrahydrofolate. Lys-285 carries the post-translational modification N6-(pyridoxal phosphate)lysine.

The protein belongs to the SHMT family. As to quaternary structure, homodimer. Requires pyridoxal 5'-phosphate as cofactor.

The protein localises to the cytoplasm. It catalyses the reaction (6R)-5,10-methylene-5,6,7,8-tetrahydrofolate + glycine + H2O = (6S)-5,6,7,8-tetrahydrofolate + L-serine. It functions in the pathway one-carbon metabolism; tetrahydrofolate interconversion. The protein operates within amino-acid biosynthesis; glycine biosynthesis; glycine from L-serine: step 1/1. Catalyzes the reversible interconversion of serine and glycine with tetrahydrofolate (THF) serving as the one-carbon carrier. This reaction serves as the major source of one-carbon groups required for the biosynthesis of purines, thymidylate, methionine, and other important biomolecules. Also exhibits THF-independent aldolase activity toward beta-hydroxyamino acids, producing glycine and aldehydes, via a retro-aldol mechanism. The sequence is that of Serine hydroxymethyltransferase from Cutibacterium acnes (strain DSM 16379 / KPA171202) (Propionibacterium acnes).